Here is a 706-residue protein sequence, read N- to C-terminus: Termination factor NPH-I homolog (706 aa).

A Helicase ATP-binding domain is found at 62–227 (IGQGENTRGL…VPCFNMLSGR (166 aa)). 75-82 (HQMGMGKT) serves as a coordination point for ATP. A DEAH box motif is present at residues 168-171 (DEAH). The Helicase C-terminal domain occupies 417–599 (QCLQPLKVLE…HLNSAFRDLL (183 aa)).

It belongs to the DEAD box helicase family. DEAH subfamily. In terms of assembly, part of the viral DNA-directed RNA polymerase that consists of 8 polII-like subunits (RPB1, RPB2, RPB3, RPB5, RPB6, RPB7, RPB9, RPB10), a capping enzyme and a termination factor.

It localises to the virion. In terms of biological role, putative DNA-dependent ATPase required for providing the needed energy to achieve the termination of early transcripts. The sequence is that of Termination factor NPH-I homolog from African swine fever virus (isolate Tick/South Africa/Pretoriuskop Pr4/1996) (ASFV).